A 389-amino-acid chain; its full sequence is Large envelope protein (389 aa).

M1 is modified (N-acetylmethionine). G2 is lipidated: N-myristoyl glycine; by host. Residues 2–108 (GQNLSTSNPL…PPLRTTHPQA (107 aa)) form a pre-S1 region. The tract at residues 2–163 (GQNLSTSNPL…FSRIGDPALN (162 aa)) is pre-S. The Virion surface; in external conformation portion of the chain corresponds to 2–170 (GQNLSTSNPL…ALNMENITSG (169 aa)). Over 2 to 242 (GQNLSTSNPL…PGYRWMCLRR (241 aa)) the chain is Intravirion; in internal conformation. Residues 76-102 (TLPANPPPASTNRQSGRQPTPLSPPLR) form a disordered region. A compositionally biased stretch (polar residues) spans 85 to 95 (STNRQSGRQPT). The interval 109–163 (MHWNSTTFHQTLQDPRVRGLYFPAGGSSSGTVNPVPTTTSPISSIFSRIGDPALN) is pre-S2. Residues 171 to 191 (FLGPLLVLQAGFFLLTRILTI) form a helical membrane-spanning segment. Residues 192 to 242 (PQSLDSWWTSLNFLGGTTVCLGQNSQSPISNHSPTSCPPTCPGYRWMCLRR) lie on the Intravirion; in external conformation side of the membrane. A helical membrane pass occupies residues 243–263 (FIIFLFILLLCLIFLLVLLDY). Residues 264–337 (QGMLPVCPLI…WASARFSWLS (74 aa)) are Virion surface-facing. N-linked (GlcNAc...) asparagine; by host glycosylation occurs at N309. The chain crosses the membrane as a helical span at residues 338–358 (LLVPFVQWFVGLSPIVWLSVI). Over 359-364 (WMMWYW) the chain is Intravirion. Residues 365–387 (GPSLYSILSPFLPLLPIFFCLWA) form a helical membrane-spanning segment. At 388-389 (YI) the chain is on the virion surface side.

This sequence belongs to the orthohepadnavirus major surface antigen family. As to quaternary structure, in its internal form (Li-HBsAg), interacts with the capsid protein and with the isoform S. Interacts with host chaperone CANX. Associates with host chaperone CANX through its pre-S2 N glycan; this association may be essential for isoform M proper secretion. In terms of assembly, interacts with isoform L. Interacts with the antigens of satellite virus HDV (HDVAgs); this interaction is required for encapsidation of HDV genomic RNA. Post-translationally, isoform M is N-terminally acetylated by host at a ratio of 90%, and N-glycosylated by host at the pre-S2 region. Myristoylated.

The protein localises to the virion membrane. Its function is as follows. The large envelope protein exists in two topological conformations, one which is termed 'external' or Le-HBsAg and the other 'internal' or Li-HBsAg. In its external conformation the protein attaches the virus to cell receptors and thereby initiating infection. This interaction determines the species specificity and liver tropism. This attachment induces virion internalization predominantly through caveolin-mediated endocytosis. The large envelope protein also assures fusion between virion membrane and endosomal membrane. In its internal conformation the protein plays a role in virion morphogenesis and mediates the contact with the nucleocapsid like a matrix protein. In terms of biological role, the middle envelope protein plays an important role in the budding of the virion. It is involved in the induction of budding in a nucleocapsid independent way. In this process the majority of envelope proteins bud to form subviral lipoprotein particles of 22 nm of diameter that do not contain a nucleocapsid. This Hepatitis B virus genotype D subtype adw (isolate United Kingdom/adyw/1979) (HBV-D) protein is Large envelope protein.